We begin with the raw amino-acid sequence, 233 residues long: Ciliary microtubule inner protein 6 (233 aa).

Composition is skewed to basic and acidic residues over residues 1–14 (MEGE…KTED) and 21–33 (AERK…EKSP). The interval 1–45 (MEGEEKQQQHKTEDDGIACVAERKVEIKNEKSPGKSTQHPKPCVD) is disordered. A mn region spans residues 127-159 (GIVPLTSLDVSGEHENNFVEYISFIHQYDARRT). The tract at residues 192–233 (LLNTLESGSSEQPQKTDKGNSSGDKVTSPGLCQQNSQELLET) is disordered. The span at 195 to 233 (TLESGSSEQPQKTDKGNSSGDKVTSPGLCQQNSQELLET) shows a compositional bias: polar residues.

The protein localises to the cell projection. It localises to the cilium. The protein is Ciliary microtubule inner protein 6 (Cimip6) of Mus musculus (Mouse).